We begin with the raw amino-acid sequence, 145 residues long: Transcriptional regulator ZitR (145 aa).

Residues methionine 1 to glutamate 142 form the HTH marR-type domain. Zn(2+) contacts are provided by glutamate 23, cysteine 29, glutamate 40, and histidine 41. A DNA-binding region (H-T-H motif) is located at residues asparagine 53–glutamate 76. Zn(2+)-binding residues include glutamate 106, histidine 107, and histidine 111.

In terms of assembly, homodimer.

With respect to regulation, zinc acts as a corepressor and is required for DNA-binding activity. Binds up to two zinc ligands per monomer. Inactive under zinc deprivation. Functionally, zinc-responsive regulator that represses expression of the zit operon in the presence of zinc. Acts by binding two palindromic operator sites overlapping the -35 and -10 boxes of the zit promoter. Could be a sensitive sensor of intracellular zinc to efficiently respond to zinc variations in the environment. The polypeptide is Transcriptional regulator ZitR (zitR) (Lactococcus lactis subsp. cremoris (strain MG1363)).